Reading from the N-terminus, the 386-residue chain is Succinate--CoA ligase [ADP-forming] subunit beta (386 aa).

One can recognise an ATP-grasp domain in the interval 9–244 (KQILKRFGIS…YDEEIPEEIE (236 aa)). ATP-binding positions include lysine 46, 53 to 55 (GRG), glutamate 99, cysteine 102, and glutamate 107. Residues asparagine 199 and aspartate 213 each coordinate Mg(2+). Substrate contacts are provided by residues asparagine 264 and 320-322 (GIM).

It belongs to the succinate/malate CoA ligase beta subunit family. As to quaternary structure, heterotetramer of two alpha and two beta subunits. Mg(2+) is required as a cofactor.

The enzyme catalyses succinate + ATP + CoA = succinyl-CoA + ADP + phosphate. It carries out the reaction GTP + succinate + CoA = succinyl-CoA + GDP + phosphate. The protein operates within carbohydrate metabolism; tricarboxylic acid cycle; succinate from succinyl-CoA (ligase route): step 1/1. Its function is as follows. Succinyl-CoA synthetase functions in the citric acid cycle (TCA), coupling the hydrolysis of succinyl-CoA to the synthesis of either ATP or GTP and thus represents the only step of substrate-level phosphorylation in the TCA. The beta subunit provides nucleotide specificity of the enzyme and binds the substrate succinate, while the binding sites for coenzyme A and phosphate are found in the alpha subunit. This is Succinate--CoA ligase [ADP-forming] subunit beta from Ehrlichia ruminantium (strain Welgevonden).